The primary structure comprises 212 residues: Thymidylate kinase (212 aa).

10 to 17 (GPDGAGKT) contacts ATP.

It belongs to the thymidylate kinase family.

The catalysed reaction is dTMP + ATP = dTDP + ADP. Functionally, phosphorylation of dTMP to form dTDP in both de novo and salvage pathways of dTTP synthesis. This Lactobacillus delbrueckii subsp. bulgaricus (strain ATCC 11842 / DSM 20081 / BCRC 10696 / JCM 1002 / NBRC 13953 / NCIMB 11778 / NCTC 12712 / WDCM 00102 / Lb 14) protein is Thymidylate kinase.